Here is a 1164-residue protein sequence, read N- to C-terminus: Phospholipid-transporting ATPase IA (1164 aa).

Residues M1 to L65 are Cytoplasmic-facing. At S25 the chain carries Phosphoserine. The residue at position 28 (T28) is a Phosphothreonine. S29 is modified (phosphoserine). The chain crosses the membrane as a helical span at residues P66–L86. The Exoplasmic loop portion of the chain corresponds to L87–D92. Residues V93 to K115 form a helical membrane-spanning segment. Residues E116–Q297 lie on the Cytoplasmic side of the membrane. A helical membrane pass occupies residues I298–W319. Over N320–F344 the chain is Exoplasmic loop. Residues L345–V366 traverse the membrane as a helical segment. The Cytoplasmic segment spans residues K367–K857. Residue D409 is the 4-aspartylphosphate intermediate of the active site. 3 residues coordinate ATP: D409, K410, and T411. Position 409 (D409) interacts with Mg(2+). Position 411 (T411) interacts with Mg(2+). S443 is subject to Phosphoserine. Residues E508, F549, K572, R605, T685, G686, D687, A741–T748, R775, and K781 each bind ATP. Residue D801 participates in Mg(2+) binding. Residues N804 and D805 each coordinate ATP. D805 is a binding site for Mg(2+). Residues C858–F878 traverse the membrane as a helical segment. The Exoplasmic loop portion of the chain corresponds to V879–R890. Residues W891–I910 form a helical membrane-spanning segment. The Cytoplasmic portion of the chain corresponds to F911–V940. Residues F941–A962 form a helical membrane-spanning segment. The Exoplasmic loop segment spans residues L963–D976. The helical transmembrane segment at Y977–E999 threads the bilayer. Residues T1000–W1005 are Cytoplasmic-facing. The helical transmembrane segment at F1006–S1026 threads the bilayer. At S1027–M1044 the chain is on the exoplasmic loop side. The chain crosses the membrane as a helical span at residues L1045 to K1070. Residues V1071–W1164 lie on the Cytoplasmic side of the membrane. ATP is bound at residue G1095–S1102. Phosphoserine is present on S1126.

Belongs to the cation transport ATPase (P-type) (TC 3.A.3) family. Type IV subfamily. As to quaternary structure, component of a P4-ATPase flippase complex which consists of a catalytic alpha subunit and an accessory beta subunit. Interacts with TMEM30A to form a flippase complex; this complex forms an intermediate phosphoenzyme. Interacts with TMEM30B; this interaction is reported conflictingly. Requires Mg(2+) as cofactor. In terms of processing, cleaved by calpain in a caspase- and calcium influx-dependent manner during platelet apoptosis leading to a 100 kDa polypeptide. As to expression, found in most adult tissues except liver, testis and placenta. Most abundant in heart, brain and skeletal muscle. Also detected in fetal tissues. Isoform 1 is only detected in brain, skeletal muscle and heart and is the most abundant form in skeletal muscle. Highly expressed in platelets.

The protein localises to the cytoplasmic vesicle. It is found in the secretory vesicle. Its subcellular location is the chromaffin granule membrane. It localises to the cytoplasmic granule. The protein resides in the cell membrane. The protein localises to the endoplasmic reticulum. It is found in the golgi apparatus. It carries out the reaction ATP + H2O + phospholipidSide 1 = ADP + phosphate + phospholipidSide 2.. The catalysed reaction is a 1,2-diacyl-sn-glycero-3-phospho-L-serine(out) + ATP + H2O = a 1,2-diacyl-sn-glycero-3-phospho-L-serine(in) + ADP + phosphate + H(+). Its activity is regulated as follows. ATPase activity is stimulated by phosphatidylserine (PS) and minimally by phosphatidylethanolamine (PE). ATPase activity is inhibited by beryllium fluoride and aluminum trifluoride. Catalytic component of a P4-ATPase flippase complex which catalyzes the hydrolysis of ATP coupled to the transport of aminophospholipids from the outer to the inner leaflet of various membranes and ensures the maintenance of asymmetric distribution of phospholipids. Phospholipid translocation also seems to be implicated in vesicle formation and in uptake of lipid signaling molecules. In vitro, its ATPase activity is selectively and stereospecifically stimulated by phosphatidylserine (PS). The flippase complex ATP8A1:TMEM30A seems to play a role in regulation of cell migration probably involving flippase-mediated translocation of phosphatidylethanolamine (PE) at the cell membrane. Acts as aminophospholipid translocase at the cell membrane in neuronal cells. This Homo sapiens (Human) protein is Phospholipid-transporting ATPase IA.